Here is a 1122-residue protein sequence, read N- to C-terminus: Cytosolic carboxypeptidase 4 (1122 aa).

The disordered stretch occupies residues 287 to 338 (PGSTSSELPLNLTEEDFDDDGDEEMDKDSDVEAVKEDDDLETDLSKLSSKPG). Residues 299-313 (TEEDFDDDGDEEMDK) are compositionally biased toward acidic residues. In terms of domain architecture, Peptidase M14 spans 731 to 1021 (YPYTYSTLMT…MYCLGLLILE (291 aa)). The Zn(2+) site is built by His-803, Glu-806, and His-900. The Proton donor/acceptor role is filled by Glu-985. The segment at 1099-1122 (CALNKDEEEEEKEEGTGWRRRSVT) is disordered.

Belongs to the peptidase M14 family. In terms of assembly, interacts with MYLK. Interacts with TCF4. It depends on Zn(2+) as a cofactor. Widely expressed at low level. Expressed in eye, muscle, pituitary, testis and to a lower extent in brain.

The protein resides in the cytoplasm. Its subcellular location is the cytosol. The catalysed reaction is (L-glutamyl)(n+1)-gamma-L-glutamyl-L-glutamyl-[protein] + H2O = (L-glutamyl)(n)-gamma-L-glutamyl-L-glutamyl-[protein] + L-glutamate. It carries out the reaction C-terminal L-alpha-aminoacyl-L-glutamyl-L-glutamyl-[tubulin] + H2O = C-terminal L-alpha-aminoacyl-L-glutamyl-[tubulin] + L-glutamate. Functionally, metallocarboxypeptidase that mediates deglutamylation of tubulin and non-tubulin target proteins. Catalyzes the removal of polyglutamate side chains present on the gamma-carboxyl group of glutamate residues within the C-terminal tail of tubulin protein. Specifically cleaves tubulin long-side-chains, while it is not able to remove the branching point glutamate. Also catalyzes the removal of polyglutamate residues from the carboxy-terminus of non-tubulin proteins such as MYLK. The protein is Cytosolic carboxypeptidase 4 of Mus musculus (Mouse).